A 120-amino-acid chain; its full sequence is NAD(P)H-quinone oxidoreductase subunit 3, chloroplastic (120 aa).

3 helical membrane-spanning segments follow: residues 9 to 29 (IFWAFLIISSVIPILAFLISA), 64 to 84 (MFALVFVVFDVETVFLYPWAM), and 88 to 108 (VLGVPVFIEAFIFMLILIVGL).

It belongs to the complex I subunit 3 family. As to quaternary structure, NDH is composed of at least 16 different subunits, 5 of which are encoded in the nucleus.

The protein resides in the plastid. Its subcellular location is the chloroplast thylakoid membrane. The enzyme catalyses a plastoquinone + NADH + (n+1) H(+)(in) = a plastoquinol + NAD(+) + n H(+)(out). The catalysed reaction is a plastoquinone + NADPH + (n+1) H(+)(in) = a plastoquinol + NADP(+) + n H(+)(out). Its function is as follows. NDH shuttles electrons from NAD(P)H:plastoquinone, via FMN and iron-sulfur (Fe-S) centers, to quinones in the photosynthetic chain and possibly in a chloroplast respiratory chain. The immediate electron acceptor for the enzyme in this species is believed to be plastoquinone. Couples the redox reaction to proton translocation, and thus conserves the redox energy in a proton gradient. The protein is NAD(P)H-quinone oxidoreductase subunit 3, chloroplastic of Citrus sinensis (Sweet orange).